The chain runs to 836 residues: Protein O-mannosyl-transferase tmtc2 (836 aa).

Residues 1-21 (MIAELLSSALGLLLYLNTLGA) form a helical membrane-spanning segment. At 22 to 77 (DFCYDDSRAIKTNQDLLPETPWNHIFFNDFWGTLLTHSGSHKSYRPLCTLSFRLNY) the chain is on the extracellular side. Residues 78–98 (LFGGLDPWNYHLVNVLLHSAV) traverse the membrane as a helical segment. Topologically, residues 99-107 (TGLFTNLCK) are cytoplasmic. A helical membrane pass occupies residues 108-128 (ALFGSGCWTLIAGLLFASHPI). Residues 129–132 (HTEA) are Extracellular-facing. A helical membrane pass occupies residues 133 to 153 (VSGIVGRADVGSGLFFLLSLL). Residues 154–164 (CYMKHCSTRGY) are Cytoplasmic-facing. Residues 165–185 (SLSSWCWILCAGFWAACSMLW) form a helical membrane-spanning segment. Residues 186 to 188 (KEQ) lie on the Extracellular side of the membrane. The chain crosses the membrane as a helical span at residues 189–209 (GVTVLAVSAVYDVFVFHKLKM). Over 210–220 (NQIISVVFKEK) the chain is Cytoplasmic. A helical transmembrane segment spans residues 221-241 (NVSFFFSVGLLFAWGVILLGA). The Extracellular segment spans residues 242 to 312 (RFYWMGNTPP…KTITDWRNIH (71 aa)). A helical membrane pass occupies residues 313–333 (TVAFYILLILLAYSSLKGSAI). The Cytoplasmic portion of the chain corresponds to 334–392 (KRDCNGKVFMNGKQNTNGHSCQSDLEHKNAEQNPVIASKLENGVKHHNSHEMQLPSTEN). Residues 393-413 (IVVLALSLLIVPFVPASNLFF) form a helical membrane-spanning segment. Y414 is a topological domain (extracellular). The helical transmembrane segment at 415–435 (VGFVIAERVLYIPSMGFCLLV) threads the bilayer. The Cytoplasmic portion of the chain corresponds to 436 to 449 (TVGARALYIKAQKN). A helical transmembrane segment spans residues 450 to 470 (ILKNLLFYATAALIVFYGLKT). Residues 471–836 (VVRNGDWKNE…EKQGLKNSKT (366 aa)) lie on the Extracellular side of the membrane. 9 TPR repeats span residues 493-526 (AKAWGNLGNVLKSQSKIDEAENAYRNALYYRSNM), 527-560 (ADMLYNLGLLLQENSKFSEALHYYKLAIGSRPTL), 561-594 (ASGYLNTGIILMNQGRTEEARRTFLKCSEIPDEN), 606-639 (TSCLYNLGKLYHEQGQYEDALIVYKEAIQKMPRQ), 643-676 (QSLYNMMGEAYMRLNVVSEAEHWYTESLKSKPDH), 677-710 (IPAHLTYGKLLTLTGRKNEAERYFLKAIQLDPNK), 711-744 (GNCYMHYGQFLLEEGRILEAAEMAKKAAELDSSE), 745-778 (FDVVFNAAHMLRQASLNEEAEKFYKLAAGLRQNY), and 779-812 (PAALMNLGAILHLNGKLEEAEYNYLRALQLKPDD).

This sequence belongs to the TMTC family.

The protein resides in the membrane. It is found in the endoplasmic reticulum. It carries out the reaction a di-trans,poly-cis-dolichyl beta-D-mannosyl phosphate + L-seryl-[protein] = 3-O-(alpha-D-mannosyl)-L-seryl-[protein] + a di-trans,poly-cis-dolichyl phosphate + H(+). It catalyses the reaction a di-trans,poly-cis-dolichyl beta-D-mannosyl phosphate + L-threonyl-[protein] = 3-O-(alpha-D-mannosyl)-L-threonyl-[protein] + a di-trans,poly-cis-dolichyl phosphate + H(+). It functions in the pathway protein modification; protein glycosylation. Its function is as follows. Transfers mannosyl residues to the hydroxyl group of serine or threonine residues. This is Protein O-mannosyl-transferase tmtc2 (tmtc2) from Xenopus laevis (African clawed frog).